Consider the following 1082-residue polypeptide: MPKDKALKKVMVIGSGPIIIGQAAEFDYAGTQACRALREEGLEVVLINSNPATIMTDANMADRIYIEPLTPEFVAKVISQERPDALLPTLGGQTGLNLAKQVADAGILDQYGVRLLGTPLESIKRAEDREHFKNMCLEIGEPVPESSIISDVDAAVAFARKIGYPVVVRPAYTLGGTGGGVAFSEDELREIAVRGLTMSIIHQVLVEKCVLGWKEIEYEVMRDAAGNCITICSMENIDPMGIHTGDSIVVAPTQTLSDREHQMLRSASLKIIRALGVEGGCNVQFALDPESYDYYVIEVNPRLSRSSALASKATGYPIAKVATKVAVGLTLDEIKNAVTGKTYACFEPALDYVVVKYPRWPFDKFSLANRNLGTQMKSTGEVMAIGRTFEEALLKAVRSLETGVTGMNLPELREWDNDRLRARMARPDDLRLFLVAEALRRGFPVNEIFELTRIDRFFLDKIKNITEAEELVRAARPTDVGTPTGVGAPAGLTPELLRRVKRIGLSDTTIAELVGTTSREVHRLRRELGVEPVYKMVDTCAGEFEATTPYYYSTYEDEDEAEPQAVRKVVVLGSGPIRIGQGIEFDYCSVHSVWALKEQGVKAIIINNNPETVSTDFDTADRLYFEPLVPEDVMNILHKEKPDGVIVQFGGQTAINLARPVEKAGFNILGTSVADIDRAEDRERFDQLVAELGIPRPPGGTGFSVEEAQRIAEQVGFPVLVRPSYVLGGRAMEIVYNSQELLEYMADAVRVTPKHPVLVDKYLLGKELEVDAVCDGETVLVPGIMEHVERAGIHSGDSIAVFPPQTLTPEIKEQLFEYTQQIARALKIRGLVNIQFVLHEGRVFVLEVNPRSSRTVPYLSKVTGIPMVNLATRICLGATLPELGYRGGLYEETRNIAVKAPVFSFAKLLDVDVCLGPEMKSTGEVMGVSKDYALALYKACLSAGYTLPSSGKAVVTIADRDKDEALPLVRSLVNLGFEIVATEGTAAFLRSRAITVEVARKVHEGSPNIVDLIRENRIHLVVNTLTKGKLTTRDGFRIRRAAVEMGVPCLTSLDTARVVIEVMRARQRGETMPLIPLQEYVS.

Positions 1-401 (MPKDKALKKV…ALLKAVRSLE (401 aa)) are carboxyphosphate synthetic domain. ATP-binding residues include R129, R169, G175, G176, K208, V210, E215, G241, I242, H243, Q284, and E298. In terms of domain architecture, ATP-grasp 1 spans 133 to 327 (KNMCLEIGEP…IAKVATKVAV (195 aa)). The Mg(2+) site is built by Q284, E298, and N300. The Mn(2+) site is built by Q284, E298, and N300. The interval 402 to 561 (TGVTGMNLPE…YSTYEDEDEA (160 aa)) is oligomerization domain. The tract at residues 562–944 (EPQAVRKVVV…ALYKACLSAG (383 aa)) is carbamoyl phosphate synthetic domain. The ATP-grasp 2 domain maps to 686–876 (DQLVAELGIP…MVNLATRICL (191 aa)). R722, K761, L763, E767, G792, I793, H794, S795, Q835, and E847 together coordinate ATP. The Mg(2+) site is built by Q835, E847, and N849. Q835, E847, and N849 together coordinate Mn(2+). Residues 945–1082 (YTLPSSGKAV…PLIPLQEYVS (138 aa)) form the MGS-like domain. The tract at residues 945–1082 (YTLPSSGKAV…PLIPLQEYVS (138 aa)) is allosteric domain.

It belongs to the CarB family. Composed of two chains; the small (or glutamine) chain promotes the hydrolysis of glutamine to ammonia, which is used by the large (or ammonia) chain to synthesize carbamoyl phosphate. Tetramer of heterodimers (alpha,beta)4. It depends on Mg(2+) as a cofactor. Requires Mn(2+) as cofactor.

The enzyme catalyses hydrogencarbonate + L-glutamine + 2 ATP + H2O = carbamoyl phosphate + L-glutamate + 2 ADP + phosphate + 2 H(+). The catalysed reaction is hydrogencarbonate + NH4(+) + 2 ATP = carbamoyl phosphate + 2 ADP + phosphate + 2 H(+). It functions in the pathway amino-acid biosynthesis; L-arginine biosynthesis; carbamoyl phosphate from bicarbonate: step 1/1. The protein operates within pyrimidine metabolism; UMP biosynthesis via de novo pathway; (S)-dihydroorotate from bicarbonate: step 1/3. In terms of biological role, large subunit of the glutamine-dependent carbamoyl phosphate synthetase (CPSase). CPSase catalyzes the formation of carbamoyl phosphate from the ammonia moiety of glutamine, carbonate, and phosphate donated by ATP, constituting the first step of 2 biosynthetic pathways, one leading to arginine and/or urea and the other to pyrimidine nucleotides. The large subunit (synthetase) binds the substrates ammonia (free or transferred from glutamine from the small subunit), hydrogencarbonate and ATP and carries out an ATP-coupled ligase reaction, activating hydrogencarbonate by forming carboxy phosphate which reacts with ammonia to form carbamoyl phosphate. This chain is Carbamoyl phosphate synthase large chain, found in Desulforudis audaxviator (strain MP104C).